A 39-amino-acid chain; its full sequence is Cytochrome b559 subunit beta (39 aa).

A helical membrane pass occupies residues 14–30 (WLAVHGLAVPTVFFLGA). Histidine 18 contributes to the heme binding site.

This sequence belongs to the PsbE/PsbF family. Heterodimer of an alpha subunit and a beta subunit. PSII is composed of 1 copy each of membrane proteins PsbA, PsbB, PsbC, PsbD, PsbE, PsbF, PsbH, PsbI, PsbJ, PsbK, PsbL, PsbM, PsbT, PsbX, PsbY, PsbZ, Psb30/Ycf12, at least 3 peripheral proteins of the oxygen-evolving complex and a large number of cofactors. It forms dimeric complexes. Heme b is required as a cofactor.

The protein localises to the plastid. It is found in the chloroplast thylakoid membrane. Its function is as follows. This b-type cytochrome is tightly associated with the reaction center of photosystem II (PSII). PSII is a light-driven water:plastoquinone oxidoreductase that uses light energy to abstract electrons from H(2)O, generating O(2) and a proton gradient subsequently used for ATP formation. It consists of a core antenna complex that captures photons, and an electron transfer chain that converts photonic excitation into a charge separation. The protein is Cytochrome b559 subunit beta of Physcomitrium patens (Spreading-leaved earth moss).